A 184-amino-acid chain; its full sequence is Large ribosomal subunit protein bL17 (184 aa).

The interval 126 to 184 (TRAARAAASKQTADEAQVEETPAEEVTEETAAEETTEAAQADEAPAEEAPVEEKKDEEK) is disordered. A compositionally biased stretch (acidic residues) spans 141 to 161 (AQVEETPAEEVTEETAAEETT).

Belongs to the bacterial ribosomal protein bL17 family. As to quaternary structure, part of the 50S ribosomal subunit. Contacts protein L32.

In Corynebacterium efficiens (strain DSM 44549 / YS-314 / AJ 12310 / JCM 11189 / NBRC 100395), this protein is Large ribosomal subunit protein bL17.